The following is a 356-amino-acid chain: Riboflavin biosynthesis protein RibD (356 aa).

The tract at residues 1-148 (MIREIDKNYM…EDFFTYITQE (148 aa)) is deaminase. Residues 4 to 126 (EIDKNYMKLA…KLRNAGIEVD (123 aa)) enclose the CMP/dCMP-type deaminase domain. Position 53 (His53) interacts with Zn(2+). Catalysis depends on Glu55, which acts as the Proton donor. Residues Cys78 and Cys87 each contribute to the Zn(2+) site. A reductase region spans residues 149–356 (RPYITLKWAQ…EDLVIFFKRY (208 aa)). Residue Ala157 participates in NADP(+) binding. Residue Ser171 coordinates substrate. Residue Trp173 participates in NADP(+) binding. A substrate-binding site is contributed by Arg187. Positions 199 and 203 each coordinate NADP(+). Residues Leu207, Arg210, and Glu290 each contribute to the substrate site. Residue 292-298 (GPRTLTS) participates in NADP(+) binding.

In the N-terminal section; belongs to the cytidine and deoxycytidylate deaminase family. It in the C-terminal section; belongs to the HTP reductase family. Zn(2+) is required as a cofactor.

The catalysed reaction is 2,5-diamino-6-hydroxy-4-(5-phosphoribosylamino)-pyrimidine + H2O + H(+) = 5-amino-6-(5-phospho-D-ribosylamino)uracil + NH4(+). It carries out the reaction 5-amino-6-(5-phospho-D-ribitylamino)uracil + NADP(+) = 5-amino-6-(5-phospho-D-ribosylamino)uracil + NADPH + H(+). Its pathway is cofactor biosynthesis; riboflavin biosynthesis; 5-amino-6-(D-ribitylamino)uracil from GTP: step 2/4. The protein operates within cofactor biosynthesis; riboflavin biosynthesis; 5-amino-6-(D-ribitylamino)uracil from GTP: step 3/4. Functionally, converts 2,5-diamino-6-(ribosylamino)-4(3h)-pyrimidinone 5'-phosphate into 5-amino-6-(ribosylamino)-2,4(1h,3h)-pyrimidinedione 5'-phosphate. This is Riboflavin biosynthesis protein RibD (ribD) from Aquifex aeolicus (strain VF5).